A 233-amino-acid polypeptide reads, in one-letter code: MAKLTKRARLIREKVEATKSYDINEAVALLKELATAKFLESVDVAVNLGVDPRKSDQNVRGATVLPHGTGRDVRVAVFTQGANAEAAKEAGAELVGMDELAAQIKAGEMNFDVVIASPDAMRVVGMLGQILGPRGLMPNPKTGTVTPNVAEAVKNAKAGQVRYRNDKNGIIHTTIGKVDFEPAQLKENLEALLGALKKAKPAAAKGVFIKKVSISTTMGAGVAVDQGTLDDAK.

Belongs to the universal ribosomal protein uL1 family. Part of the 50S ribosomal subunit.

Binds directly to 23S rRNA. The L1 stalk is quite mobile in the ribosome, and is involved in E site tRNA release. In terms of biological role, protein L1 is also a translational repressor protein, it controls the translation of the L11 operon by binding to its mRNA. This is Large ribosomal subunit protein uL1 from Shewanella pealeana (strain ATCC 700345 / ANG-SQ1).